The sequence spans 72 residues: SRY-related protein MG42 (72 aa).

Residues 1–69 constitute a DNA-binding region (HMG box); sequence VKRPMNAFMV…KHMADYPNYK (69 aa).

The protein localises to the nucleus. The sequence is that of SRY-related protein MG42 from Tarentola mauritanica (Common wall gecko).